Consider the following 692-residue polypeptide: Putative ESX-1 scaffolding and assembly protein SaeA (692 aa).

Positions 1-21 are enriched in basic and acidic residues; it reads MGERGELVSDLHPSDDHDADP. Disordered regions lie at residues 1-23 and 87-134; these read MGER…DPRL and PAAP…TTGF. Positions 89 to 107 are enriched in pro residues; the sequence is APEPDPPPVPEPQPEPEPG.

In terms of biological role, may be involved in assembly of the ESX-1 / type VII specialized secretion system (T7SS), which exports several proteins including EsxA and EsxB. Involved in DNA conjugation in recipient (MKD8) but not donor (mc(2)155) strain. This chain is Putative ESX-1 scaffolding and assembly protein SaeA (saeA), found in Mycolicibacterium smegmatis (strain MKD8) (Mycobacterium smegmatis).